We begin with the raw amino-acid sequence, 938 residues long: Isoleucine--tRNA ligase (938 aa).

Positions 58-68 (PYANGNIHIGH) match the 'HIGH' region motif. Glu562 contributes to the L-isoleucyl-5'-AMP binding site. A 'KMSKS' region motif is present at residues 603–607 (KMSKS). Lys606 contributes to the ATP binding site. Zn(2+)-binding residues include Cys901, Cys904, Cys921, and Cys924.

It belongs to the class-I aminoacyl-tRNA synthetase family. IleS type 1 subfamily. In terms of assembly, monomer. Zn(2+) serves as cofactor.

It localises to the cytoplasm. It carries out the reaction tRNA(Ile) + L-isoleucine + ATP = L-isoleucyl-tRNA(Ile) + AMP + diphosphate. Functionally, catalyzes the attachment of isoleucine to tRNA(Ile). As IleRS can inadvertently accommodate and process structurally similar amino acids such as valine, to avoid such errors it has two additional distinct tRNA(Ile)-dependent editing activities. One activity is designated as 'pretransfer' editing and involves the hydrolysis of activated Val-AMP. The other activity is designated 'posttransfer' editing and involves deacylation of mischarged Val-tRNA(Ile). The chain is Isoleucine--tRNA ligase from Actinobacillus pleuropneumoniae serotype 5b (strain L20).